Consider the following 670-residue polypeptide: MSLTNLFKLQSSLKPSGDQPQAIQKLVNNFKQGLQEQILLGATGTGKTFTIANIIQHLQQKTLVIAHNKTLAGQLYNELKAMFPNNRVEYFISYYDYYQPEAYVASSDTYIEKDSKINDEIDQLRHSAAGSLLNRDDVIVVASVSCIYGVGDLKDYQKSTLHLQIGDKYERQALINKLIELKYQRNEINFQRGTFRVRGDIIEIIASSSKEIGIRIIFFGNEIENIQNFDVLNGKAITNLKLITLFPASLYATNTQKLQEGIKRIRQELKEQINHFEKTNQLLAAQKIKMRTLHDLEMLEQIGNCNGVENYSRHLALKEKGEAPSTLIDFFGNEFLTIIDESHVTIPQIKGMYFGDFSRKTNLVNFGFRLPSALDNRPLKFHEFQAKMNKVIYLSATPGNYELTKKIPIVEQIIRPTFVLDPEIEIRPTHNQMDDLYFEIKHQTKNNQRILITTLTINMSEDLTAYLKNLCIKVAYLHSEIKSLQRLEILKDLRLGKYDCLVGVNLLREGLDLPEVALVAILDADKQGFLRNERSLIQTIGRAARNITGKAIMYADCISPAMQIAIEETYRRRKIQQQYNETMKVTPTALNKTILETISIKQKESAQNENENGKVKGQKKLQTHTNITAKNKEIKRLQKMMKEAAKTLDFEKAATLRDLILELEKKGKLK.

The region spanning 28 to 414 is the Helicase ATP-binding domain; sequence NNFKQGLQEQ…KKIPIVEQII (387 aa). 41-48 is a binding site for ATP; the sequence is GATGTGKT. The Beta-hairpin signature appears at 94 to 117; that stretch reads YYDYYQPEAYVASSDTYIEKDSKI. Positions 432–594 constitute a Helicase C-terminal domain; that stretch reads QMDDLYFEIK…VTPTALNKTI (163 aa). Positions 631–666 constitute a UVR domain; it reads NKEIKRLQKMMKEAAKTLDFEKAATLRDLILELEKK.

Belongs to the UvrB family. In terms of assembly, forms a heterotetramer with UvrA during the search for lesions. Interacts with UvrC in an incision complex.

It localises to the cytoplasm. Functionally, the UvrABC repair system catalyzes the recognition and processing of DNA lesions. A damage recognition complex composed of 2 UvrA and 2 UvrB subunits scans DNA for abnormalities. Upon binding of the UvrA(2)B(2) complex to a putative damaged site, the DNA wraps around one UvrB monomer. DNA wrap is dependent on ATP binding by UvrB and probably causes local melting of the DNA helix, facilitating insertion of UvrB beta-hairpin between the DNA strands. Then UvrB probes one DNA strand for the presence of a lesion. If a lesion is found the UvrA subunits dissociate and the UvrB-DNA preincision complex is formed. This complex is subsequently bound by UvrC and the second UvrB is released. If no lesion is found, the DNA wraps around the other UvrB subunit that will check the other stand for damage. This Onion yellows phytoplasma (strain OY-M) protein is UvrABC system protein B.